Here is a 167-residue protein sequence, read N- to C-terminus: Calcium-binding protein CML19 (167 aa).

EF-hand domains lie at 23–58 (QKRR…LGFE), 59–94 (MNNQ…KFGE), 96–131 (DSID…LGEN), and 132–167 (FTDN…TSYG). Ca(2+)-binding residues include Asp36, Asp38, Ser40, Ser42, Glu47, Asp72, Asn74, Ser76, Glu83, Asp109, Asp111, Asn113, Lys115, Asp120, Asp145, Asp147, Asp149, Glu151, and Glu156.

The protein belongs to the centrin family. In terms of assembly, interacts with RAD4. Calcium is required for this interaction. Interacts with SAC3B. Expressed in leaves, roots, and at lower level in stems. Barely detectable in flower buds and flowers.

The protein resides in the cytoplasm. The protein localises to the nucleus. In terms of biological role, potential calcium sensor that binds calcium in vitro. Modulates homologous recombination and nucleotide excision repair (NER). Involved in the early response to UV irradiation. This is Calcium-binding protein CML19 from Arabidopsis thaliana (Mouse-ear cress).